A 433-amino-acid polypeptide reads, in one-letter code: Cyclin-dependent kinase 15 (433 aa).

Residues 46-83 (ASSSTASFHPRGLEAASAQKLKSKRPRSNSDSFQEENL) form a disordered region. One can recognise a Protein kinase domain in the interval 52-336 (SFHPRGLEAA…SKLPNYNPEW (285 aa)). Residues 58 to 66 (LEAASAQKL) and Glu81 contribute to the ATP site. The active-site Proton acceptor is Thr173.

The protein belongs to the protein kinase superfamily. CMGC Ser/Thr protein kinase family. CDC2/CDKX subfamily. Mg(2+) serves as cofactor.

It carries out the reaction L-seryl-[protein] + ATP = O-phospho-L-seryl-[protein] + ADP + H(+). The catalysed reaction is L-threonyl-[protein] + ATP = O-phospho-L-threonyl-[protein] + ADP + H(+). Functionally, serine/threonine-protein kinase that acts like an antiapoptotic protein that counters TRAIL/TNFSF10-induced apoptosis by inducing phosphorylation of BIRC5 at 'Thr-34'. In Mus musculus (Mouse), this protein is Cyclin-dependent kinase 15 (Cdk15).